A 182-amino-acid polypeptide reads, in one-letter code: Guanylate kinase (182 aa).

The region spanning 2–180 is the Guanylate kinase-like domain; the sequence is GTLTVITGPS…ALLKLEGLMG (179 aa). 9 to 16 is a binding site for ATP; that stretch reads GPSGVGKG.

It belongs to the guanylate kinase family.

The protein resides in the cytoplasm. It carries out the reaction GMP + ATP = GDP + ADP. It catalyses the reaction dZMP + ATP = dZDP + ADP. It functions in the pathway purine metabolism. Essential for recycling GMP and indirectly, cGMP. Functionally, (Microbial infection) Catalyzes the phosphorylation of dZMP to dZDP, when the bacterium is infected by a phage that produces the substrate for the synthesis of dZTP (2- amino-2'-deoxyadenosine 5'-triphosphate), which is then used by the phage as a DNA polymerase substrate. The sequence is that of Guanylate kinase from Parasynechococcus marenigrum (strain WH8102).